The following is a 460-amino-acid chain: Argininosuccinate lyase (460 aa).

This sequence belongs to the lyase 1 family. Argininosuccinate lyase subfamily.

It is found in the cytoplasm. The catalysed reaction is 2-(N(omega)-L-arginino)succinate = fumarate + L-arginine. It participates in amino-acid biosynthesis; L-arginine biosynthesis; L-arginine from L-ornithine and carbamoyl phosphate: step 3/3. This Streptococcus mutans serotype c (strain ATCC 700610 / UA159) protein is Argininosuccinate lyase.